The primary structure comprises 457 residues: RuvB-like helicase 1 (457 aa).

73 to 80 lines the ATP pocket; it reads GGPSTGKT.

It belongs to the RuvB family. As to quaternary structure, may form heterododecamers with RVB2. Component of the SWR1 chromatin remodeling complex, the INO80 chromatin remodeling complex, and of the R2TP complex.

It localises to the nucleus. It carries out the reaction ATP + H2O = ADP + phosphate + H(+). Functionally, DNA helicase which participates in several chromatin remodeling complexes, including the SWR1 and the INO80 complexes. The SWR1 complex mediates the ATP-dependent exchange of histone H2A for the H2A variant HZT1 leading to transcriptional regulation of selected genes by chromatin remodeling. The INO80 complex remodels chromatin by shifting nucleosomes and is involved in DNA repair. Also involved in pre-rRNA processing. This chain is RuvB-like helicase 1 (RVB1), found in Candida glabrata (strain ATCC 2001 / BCRC 20586 / JCM 3761 / NBRC 0622 / NRRL Y-65 / CBS 138) (Yeast).